A 315-amino-acid chain; its full sequence is ADP/ATP translocase 4 (315 aa).

Over Met1–Ser19 the chain is Mitochondrial intermembrane. A Solcar 1 repeat occupies Ser18–Leu110. Residues Phe20–Gln49 form a helical membrane-spanning segment. Residues Val50–Asn86 lie on the Mitochondrial matrix side of the membrane. The chain crosses the membrane as a helical span at residues Leu87–Phe111. Residues Arg92 and Lys104 each coordinate ADP. Residues Met112–Phe121 lie on the Mitochondrial intermembrane side of the membrane. Residues Trp122 to Val142 traverse the membrane as a helical segment. 2 Solcar repeats span residues Arg123–Leu213 and Thr220–Phe307. The Mitochondrial matrix segment spans residues Val143–Gly190. The helical transmembrane segment at Val191–Lys211 threads the bilayer. At Gly212–Phe222 the chain is on the mitochondrial intermembrane side. Residues Leu223 to Phe243 form a helical membrane-spanning segment. Topologically, residues Asp244 to Gly283 are mitochondrial matrix. Arg247 serves as a coordination point for ADP. The segment at Arg247–Met252 is important for transport activity. The Nucleotide carrier signature motif motif lies at Arg247–Met252. The chain crosses the membrane as a helical span at residues Ala284–Tyr301. Residues Asp302–Arg315 lie on the Mitochondrial intermembrane side of the membrane.

This sequence belongs to the mitochondrial carrier (TC 2.A.29) family. In terms of assembly, monomer.

The protein localises to the mitochondrion inner membrane. The protein resides in the membrane. It is found in the cell projection. It localises to the cilium. Its subcellular location is the flagellum membrane. The enzyme catalyses ADP(in) + ATP(out) = ADP(out) + ATP(in). It catalyses the reaction dATP(out) + ADP(in) = dATP(in) + ADP(out). It carries out the reaction dADP(in) + ADP(out) = dADP(out) + ADP(in). The catalysed reaction is H(+)(in) = H(+)(out). With respect to regulation, the matrix-open state (m-state) is inhibited by the membrane-permeable bongkrekic acid (BKA). The cytoplasmic-open state (c-state) is inhibited by the membrane-impermeable toxic inhibitor carboxyatractyloside (CATR). Proton transporter activity is inhibited by ADP:ATP antiporter activity. ADP:ATP antiporter that mediates import of ADP into the mitochondrial matrix for ATP synthesis, and export of ATP out to fuel the cell. Cycles between the cytoplasmic-open state (c-state) and the matrix-open state (m-state): operates by the alternating access mechanism with a single substrate-binding site intermittently exposed to either the cytosolic (c-state) or matrix (m-state) side of the inner mitochondrial membrane. Specifically required during spermatogenesis, probably to mediate ADP:ATP exchange in spermatocytes. Large ATP supplies from mitochondria may be critical for normal progression of spermatogenesis during early stages of meiotic prophase I, including DNA double-strand break repair and chromosomal synapsis. In addition to its ADP:ATP antiporter activity, also involved in mitochondrial uncoupling and mitochondrial permeability transition pore (mPTP) activity. Plays a role in mitochondrial uncoupling by acting as a proton transporter: proton transport uncouples the proton flows via the electron transport chain and ATP synthase to reduce the efficiency of ATP production and cause mitochondrial thermogenesis. Proton transporter activity is inhibited by ADP:ATP antiporter activity, suggesting that SLC25A31/ANT4 acts as a master regulator of mitochondrial energy output by maintaining a delicate balance between ATP production (ADP:ATP antiporter activity) and thermogenesis (proton transporter activity). Proton transporter activity requires free fatty acids as cofactor, but does not transport it. Among nucleotides, may also exchange ADP for dATP and dADP. Also plays a key role in mPTP opening, a non-specific pore that enables free passage of the mitochondrial membranes to solutes of up to 1.5 kDa, and which contributes to cell death. It is however unclear if SLC25A31/ANT4 constitutes a pore-forming component of mPTP or regulates it. The protein is ADP/ATP translocase 4 of Macaca fascicularis (Crab-eating macaque).